Consider the following 545-residue polypeptide: Glucose-6-phosphate isomerase (545 aa).

The active-site Proton donor is the glutamate 351. Catalysis depends on residues histidine 382 and lysine 510.

This sequence belongs to the GPI family.

It is found in the cytoplasm. It catalyses the reaction alpha-D-glucose 6-phosphate = beta-D-fructose 6-phosphate. The protein operates within carbohydrate biosynthesis; gluconeogenesis. It functions in the pathway carbohydrate degradation; glycolysis; D-glyceraldehyde 3-phosphate and glycerone phosphate from D-glucose: step 2/4. Functionally, catalyzes the reversible isomerization of glucose-6-phosphate to fructose-6-phosphate. The protein is Glucose-6-phosphate isomerase of Shewanella baltica (strain OS195).